A 260-amino-acid chain; its full sequence is 3-alpha-(or 20-beta)-hydroxysteroid dehydrogenase (260 aa).

Residues arginine 17, methionine 19, aspartate 38, aspartate 61, valine 62, asparagine 88, tyrosine 153, lysine 157, valine 186, threonine 188, and threonine 191 each contribute to the NAD(+) site. Catalysis depends on tyrosine 153, which acts as the Proton acceptor.

This sequence belongs to the short-chain dehydrogenases/reductases (SDR) family. In terms of assembly, homotetramer.

The catalysed reaction is androstan-3alpha,17beta-diol + NAD(+) = 17beta-hydroxyandrostanone + NADH + H(+). The protein operates within lipid metabolism; steroid degradation. In terms of biological role, probably involved in steroid metabolism. The chain is 3-alpha-(or 20-beta)-hydroxysteroid dehydrogenase (fabG3) from Mycobacterium bovis (strain ATCC BAA-935 / AF2122/97).